A 170-amino-acid chain; its full sequence is Calcineurin subunit B type 2 (170 aa).

G2 is lipidated: N-myristoyl glycine. 4 consecutive EF-hand domains span residues 18–46 (DEIK…FMSL), 50–85 (RHNP…FSVK), 87–122 (DEEQ…MVGN), and 128–163 (QLQQ…LEIH). D31, D33, S35, S37, E42, D63, D65, D67, E69, E74, D100, D102, D104, Y106, and E111 together coordinate Ca(2+). The tract at residues 131-136 (QLVDKT) is calcineurin A binding. Ca(2+) contacts are provided by D141, D143, D145, K147, and E152.

It belongs to the calcineurin regulatory subunit family. In terms of assembly, forms a complex composed of a calmodulin-dependent catalytic subunit (also known as calcineurin A) and a regulatory Ca(2+)-binding subunit (also known as calcineurin B). There are three catalytic subunits, each encoded by a separate gene (PPP3CA, PPP3CB, and PPP3CC) and two regulatory subunits which are also encoded by separate genes (PPP3R1 and PPP3R2). Interacts with SPATA33 (via PQIIIT motif). Testis-specific.

Its subcellular location is the mitochondrion. Functionally, regulatory subunit of calcineurin, a calcium-dependent, calmodulin stimulated protein phosphatase. Confers calcium sensitivity. This Homo sapiens (Human) protein is Calcineurin subunit B type 2 (PPP3R2).